The sequence spans 575 residues: Proline--tRNA ligase (575 aa).

It belongs to the class-II aminoacyl-tRNA synthetase family. ProS type 1 subfamily. In terms of assembly, homodimer.

It is found in the cytoplasm. The catalysed reaction is tRNA(Pro) + L-proline + ATP = L-prolyl-tRNA(Pro) + AMP + diphosphate. Functionally, catalyzes the attachment of proline to tRNA(Pro) in a two-step reaction: proline is first activated by ATP to form Pro-AMP and then transferred to the acceptor end of tRNA(Pro). As ProRS can inadvertently accommodate and process non-cognate amino acids such as alanine and cysteine, to avoid such errors it has two additional distinct editing activities against alanine. One activity is designated as 'pretransfer' editing and involves the tRNA(Pro)-independent hydrolysis of activated Ala-AMP. The other activity is designated 'posttransfer' editing and involves deacylation of mischarged Ala-tRNA(Pro). The misacylated Cys-tRNA(Pro) is not edited by ProRS. This Pseudothermotoga lettingae (strain ATCC BAA-301 / DSM 14385 / NBRC 107922 / TMO) (Thermotoga lettingae) protein is Proline--tRNA ligase.